Reading from the N-terminus, the 582-residue chain is Aspartate--tRNA(Asp/Asn) ligase (582 aa).

E177 contacts L-aspartate. The segment at 201–204 is aspartate; it reads QLFK. R223 contacts L-aspartate. Residues 223 to 225 and Q232 contribute to the ATP site; that span reads RDE. H447 is a binding site for L-aspartate. E481 lines the ATP pocket. Residue R488 coordinates L-aspartate. An ATP-binding site is contributed by 533 to 536; the sequence is GLDR.

It belongs to the class-II aminoacyl-tRNA synthetase family. Type 1 subfamily. As to quaternary structure, homodimer.

The protein localises to the cytoplasm. It carries out the reaction tRNA(Asx) + L-aspartate + ATP = L-aspartyl-tRNA(Asx) + AMP + diphosphate. Its function is as follows. Aspartyl-tRNA synthetase with relaxed tRNA specificity since it is able to aspartylate not only its cognate tRNA(Asp) but also tRNA(Asn). Reaction proceeds in two steps: L-aspartate is first activated by ATP to form Asp-AMP and then transferred to the acceptor end of tRNA(Asp/Asn). This Chlamydia muridarum (strain MoPn / Nigg) protein is Aspartate--tRNA(Asp/Asn) ligase.